The following is a 448-amino-acid chain: Glutamyl-tRNA reductase (448 aa).

Substrate-binding positions include 49–52 (TCNR), serine 109, 114–116 (ETQ), and glutamine 120. Cysteine 50 acts as the Nucleophile in catalysis. NADP(+) is bound at residue 189 to 194 (GAGEMG).

The protein belongs to the glutamyl-tRNA reductase family. In terms of assembly, homodimer.

It catalyses the reaction (S)-4-amino-5-oxopentanoate + tRNA(Glu) + NADP(+) = L-glutamyl-tRNA(Glu) + NADPH + H(+). Its pathway is porphyrin-containing compound metabolism; protoporphyrin-IX biosynthesis; 5-aminolevulinate from L-glutamyl-tRNA(Glu): step 1/2. Functionally, catalyzes the NADPH-dependent reduction of glutamyl-tRNA(Glu) to glutamate 1-semialdehyde (GSA). In Staphylococcus epidermidis (strain ATCC 35984 / DSM 28319 / BCRC 17069 / CCUG 31568 / BM 3577 / RP62A), this protein is Glutamyl-tRNA reductase.